Consider the following 260-residue polypeptide: Large ribosomal subunit protein uL2 (260 aa).

The tract at residues 208 to 230 is disordered; that stretch reads EHPHGGGNHQHIGHPSTVRRDAS.

The protein belongs to the universal ribosomal protein uL2 family.

The protein localises to the cytoplasm. This is Large ribosomal subunit protein uL2 from Caenorhabditis elegans.